The primary structure comprises 357 residues: Glutamate 5-kinase (357 aa).

Lys-7 lines the ATP pocket. Substrate contacts are provided by Ser-43, Asp-130, and Asn-142. 162-163 (TD) provides a ligand contact to ATP. The region spanning 270–347 (QGELTLDAGA…PAAGPSPVVV (78 aa)) is the PUA domain.

It belongs to the glutamate 5-kinase family.

It localises to the cytoplasm. The enzyme catalyses L-glutamate + ATP = L-glutamyl 5-phosphate + ADP. Its pathway is amino-acid biosynthesis; L-proline biosynthesis; L-glutamate 5-semialdehyde from L-glutamate: step 1/2. In terms of biological role, catalyzes the transfer of a phosphate group to glutamate to form L-glutamate 5-phosphate. The protein is Glutamate 5-kinase of Parasynechococcus marenigrum (strain WH8102).